We begin with the raw amino-acid sequence, 246 residues long: Protein lin-37 homolog (246 aa).

Met1 carries the N-acetylmethionine modification. Residues Lys5 and Lys7 each participate in a glycyl lysine isopeptide (Lys-Gly) (interchain with G-Cter in SUMO2) cross-link. A compositionally biased stretch (basic and acidic residues) spans Asp36–Asp55. 2 disordered regions span residues Asp36–Gln90 and Pro127–Arg209. Ser135 and Ser138 each carry phosphoserine. Residues Leu163–Pro172 are compositionally biased toward pro residues. Phosphothreonine is present on Thr167. Residues Ser182 and Ser202 each carry the phosphoserine modification.

In terms of assembly, component of the DREAM complex (also named LINC complex) at least composed of E2F4, E2F5, LIN9, LIN37, LIN52, LIN54, MYBL1, MYBL2, RBL1, RBL2, RBBP4, TFDP1 and TFDP2. The complex exists in quiescent cells where it represses cell cycle-dependent genes. It dissociates in S phase when LIN9, LIN37, LIN52 and LIN54 form a subcomplex that binds to MYBL2.

This chain is Protein lin-37 homolog (LIN37), found in Bos taurus (Bovine).